Reading from the N-terminus, the 102-residue chain is Large ribosomal subunit protein uL23c (102 aa).

It belongs to the universal ribosomal protein uL23 family. Part of the 50S ribosomal subunit.

The protein resides in the plastid. Its subcellular location is the chloroplast. In terms of biological role, binds to 23S rRNA. The chain is Large ribosomal subunit protein uL23c (rpl23) from Phaeodactylum tricornutum (strain CCAP 1055/1).